Consider the following 66-residue polypeptide: Surface composition regulator (66 aa).

It belongs to the GlgS family.

Its function is as follows. Major determinant of cell surface composition. Negatively regulates motility, adhesion and synthesis of biofilm exopolysaccharides. This chain is Surface composition regulator, found in Shigella dysenteriae serotype 1 (strain Sd197).